A 167-amino-acid chain; its full sequence is Protein-export protein SecB (167 aa).

It belongs to the SecB family. As to quaternary structure, homotetramer, a dimer of dimers. One homotetramer interacts with 1 SecA dimer.

It is found in the cytoplasm. Its function is as follows. One of the proteins required for the normal export of preproteins out of the cell cytoplasm. It is a molecular chaperone that binds to a subset of precursor proteins, maintaining them in a translocation-competent state. It also specifically binds to its receptor SecA. This Wolbachia sp. subsp. Brugia malayi (strain TRS) protein is Protein-export protein SecB.